The sequence spans 78 residues: Small ribosomal subunit protein bS20 (78 aa).

It belongs to the bacterial ribosomal protein bS20 family.

Functionally, binds directly to 16S ribosomal RNA. This Streptococcus thermophilus (strain ATCC BAA-491 / LMD-9) protein is Small ribosomal subunit protein bS20.